Reading from the N-terminus, the 427-residue chain is 3-phosphoshikimate 1-carboxyvinyltransferase (427 aa).

3-phosphoshikimate is bound by residues lysine 22, serine 23, and arginine 27. Lysine 22 is a binding site for phosphoenolpyruvate. Phosphoenolpyruvate is bound by residues glycine 96 and arginine 124. 3-phosphoshikimate contacts are provided by serine 169, serine 170, glutamine 171, serine 197, aspartate 313, asparagine 336, and lysine 340. Glutamine 171 contacts phosphoenolpyruvate. Aspartate 313 (proton acceptor) is an active-site residue. 3 residues coordinate phosphoenolpyruvate: arginine 344, arginine 386, and lysine 411.

The protein belongs to the EPSP synthase family. As to quaternary structure, monomer.

It is found in the cytoplasm. The enzyme catalyses 3-phosphoshikimate + phosphoenolpyruvate = 5-O-(1-carboxyvinyl)-3-phosphoshikimate + phosphate. The protein operates within metabolic intermediate biosynthesis; chorismate biosynthesis; chorismate from D-erythrose 4-phosphate and phosphoenolpyruvate: step 6/7. Functionally, catalyzes the transfer of the enolpyruvyl moiety of phosphoenolpyruvate (PEP) to the 5-hydroxyl of shikimate-3-phosphate (S3P) to produce enolpyruvyl shikimate-3-phosphate and inorganic phosphate. The polypeptide is 3-phosphoshikimate 1-carboxyvinyltransferase (Salmonella typhimurium (strain LT2 / SGSC1412 / ATCC 700720)).